Reading from the N-terminus, the 234-residue chain is Aspartate/glutamate leucyltransferase (234 aa).

The protein belongs to the R-transferase family. Bpt subfamily.

It is found in the cytoplasm. It catalyses the reaction N-terminal L-glutamyl-[protein] + L-leucyl-tRNA(Leu) = N-terminal L-leucyl-L-glutamyl-[protein] + tRNA(Leu) + H(+). The catalysed reaction is N-terminal L-aspartyl-[protein] + L-leucyl-tRNA(Leu) = N-terminal L-leucyl-L-aspartyl-[protein] + tRNA(Leu) + H(+). In terms of biological role, functions in the N-end rule pathway of protein degradation where it conjugates Leu from its aminoacyl-tRNA to the N-termini of proteins containing an N-terminal aspartate or glutamate. This Hahella chejuensis (strain KCTC 2396) protein is Aspartate/glutamate leucyltransferase.